A 293-amino-acid polypeptide reads, in one-letter code: Small ribosomal subunit biogenesis GTPase RsgA (293 aa).

Positions 63 to 223 (KNELVRPPIA…VADTPGFSSL (161 aa)) constitute a CP-type G domain. Residues 112–115 (SKMD) and 166–174 (GQSGVGKSS) each bind GTP. Zn(2+) is bound by residues Cys247, Cys252, His254, and Cys260.

This sequence belongs to the TRAFAC class YlqF/YawG GTPase family. RsgA subfamily. As to quaternary structure, monomer. Associates with 30S ribosomal subunit, binds 16S rRNA. It depends on Zn(2+) as a cofactor.

It is found in the cytoplasm. Functionally, one of several proteins that assist in the late maturation steps of the functional core of the 30S ribosomal subunit. Helps release RbfA from mature subunits. May play a role in the assembly of ribosomal proteins into the subunit. Circularly permuted GTPase that catalyzes slow GTP hydrolysis, GTPase activity is stimulated by the 30S ribosomal subunit. The sequence is that of Small ribosomal subunit biogenesis GTPase RsgA from Bacillus cereus (strain ATCC 10987 / NRS 248).